A 620-amino-acid polypeptide reads, in one-letter code: NADPH-dependent diflavin oxidoreductase 1 (620 aa).

Residues 6–168 (IAILYGSETG…VYSEFEKRVL (163 aa)) form the Flavodoxin-like domain. FMN contacts are provided by residues 12 to 17 (SETGTA), 59 to 62 (STTG), and 106 to 115 (LGDSSYSKFN). In terms of domain architecture, FAD-binding FR-type spans 222–475 (SSVKYGTVVT…LLPAGKQDRP (254 aa)). FAD is bound by residues Arg-380, 410–413 (RFFS), and 442–445 (GLCT). NADP(+) is bound at residue 535 to 536 (SR). Trp-620 is an FAD binding site.

The protein belongs to the NADPH-dependent diflavin oxidoreductase NDOR1 family. This sequence in the N-terminal section; belongs to the flavodoxin family. It in the C-terminal section; belongs to the flavoprotein pyridine nucleotide cytochrome reductase family. As to quaternary structure, interacts with DRE2; as part of the cytosolic iron-sulfur (Fe-S) protein assembly (CIA) machinery. The cofactor is FAD. FMN serves as cofactor.

Its subcellular location is the cytoplasm. It localises to the mitochondrion. The enzyme catalyses 2 oxidized [2Fe-2S]-[protein] + NADPH = 2 reduced [2Fe-2S]-[protein] + NADP(+) + H(+). Functionally, NADPH-dependent reductase which is a central component of the cytosolic iron-sulfur (Fe-S) protein assembly (CIA) machinery. Transfers electrons from NADPH via its FAD and FMN prosthetic groups to the [2Fe-2S] cluster of DRE2, another key component of the CIA machinery. In turn, this reduced cluster provides electrons for assembly of cytosolic iron-sulfur cluster proteins. Positively controls H(2)O(2)-induced cell death. The polypeptide is NADPH-dependent diflavin oxidoreductase 1 (Eremothecium gossypii (strain ATCC 10895 / CBS 109.51 / FGSC 9923 / NRRL Y-1056) (Yeast)).